Here is a 130-residue protein sequence, read N- to C-terminus: uncharacterized protein (130 aa).

Methionine 1 is modified (N-acetylmethionine).

As to quaternary structure, homotetramer.

This is an uncharacterized protein from Arabidopsis thaliana (Mouse-ear cress).